The chain runs to 160 residues: ATP synthase subunit b (160 aa).

The helical transmembrane segment at 12 to 32 threads the bilayer; the sequence is ISFVLFVWFCMKYVWYPFISI.

The protein belongs to the ATPase B chain family. F-type ATPases have 2 components, F(1) - the catalytic core - and F(0) - the membrane proton channel. F(1) has five subunits: alpha(3), beta(3), gamma(1), delta(1), epsilon(1). F(0) has three main subunits: a(1), b(2) and c(10-14). The alpha and beta chains form an alternating ring which encloses part of the gamma chain. F(1) is attached to F(0) by a central stalk formed by the gamma and epsilon chains, while a peripheral stalk is formed by the delta and b chains.

Its subcellular location is the cell inner membrane. Its function is as follows. F(1)F(0) ATP synthase produces ATP from ADP in the presence of a proton or sodium gradient. F-type ATPases consist of two structural domains, F(1) containing the extramembraneous catalytic core and F(0) containing the membrane proton channel, linked together by a central stalk and a peripheral stalk. During catalysis, ATP synthesis in the catalytic domain of F(1) is coupled via a rotary mechanism of the central stalk subunits to proton translocation. In terms of biological role, component of the F(0) channel, it forms part of the peripheral stalk, linking F(1) to F(0). This chain is ATP synthase subunit b, found in Blochmanniella pennsylvanica (strain BPEN).